Reading from the N-terminus, the 100-residue chain is Probable steroid-binding protein 3 (100 aa).

Residue M1 is modified to N-acetylmethionine. A Cytochrome b5 heme-binding domain is found at 1 to 82 (MEFTAEQLSQ…LTEKEINTLN (82 aa)). The tract at residues 1–82 (MEFTAEQLSQ…LTEKEINTLN (82 aa)) is sterol-binding.

It belongs to the cytochrome b5 family. MAPR subfamily.

The protein localises to the nucleus. This Arabidopsis thaliana (Mouse-ear cress) protein is Probable steroid-binding protein 3 (MP3).